The chain runs to 87 residues: HssA/B-like protein 56 (87 aa).

Belongs to the hssA/B family.

The chain is HssA/B-like protein 56 (hssl56) from Dictyostelium discoideum (Social amoeba).